The sequence spans 127 residues: uncharacterized protein (127 aa).

Disordered regions lie at residues 1–22 (MLPA…KMKG) and 53–106 (LVGK…PGPK). Positions 76 to 95 (PNGEAHAEQARRKISVEEKQ) are enriched in basic and acidic residues.

It localises to the mitochondrion. This is an uncharacterized protein from Arabidopsis thaliana (Mouse-ear cress).